A 471-amino-acid chain; its full sequence is Transcription initiation factor TFIID subunit 7-like (471 aa).

Disordered stretches follow at residues 1–84, 192–211, and 328–377; these read MERG…RQGT, SPEGEPHSPPEEPVVSTGPT, and EMMG…EELE. Phosphoserine is present on Ser199. Over residues 347-377 the composition is skewed to acidic residues; it reads GDDDDDEDEDDEDYGNEKEEEETDNSEEELE. A coiled-coil region spans residues 358-433; the sequence is EDYGNEKEEE…QKELLRKVEN (76 aa).

It belongs to the TAF7 family. As to quaternary structure, TFIID is composed of TATA binding protein (TBP) and a number of TBP-associated factors (TAFs). TAF7L may replace TAF7 in a spermatogenesis-specific form of TFIID. Interacts with TBP; the interaction occurs in a sub-population of cells (pachytene and haploid round spermatids) and is developmentally regulated through differential intracellular localization of the two proteins. Interacts with TAF1. Testis-specific (at protein level). Expressed during spermatogenesis from spermatogonia stage up to the stage of round spermatids.

It is found in the nucleus. The protein localises to the cytoplasm. Probably functions as a spermatogenesis-specific component of the DNA-binding general transcription factor complex TFIID, a multimeric protein complex that plays a central role in mediating promoter responses to various activators and repressors. May play a role in spermatogenesis. The sequence is that of Transcription initiation factor TFIID subunit 7-like (Taf7l) from Mus musculus (Mouse).